Consider the following 247-residue polypeptide: tRNA (guanine-N(1)-)-methyltransferase (247 aa).

S-adenosyl-L-methionine is bound by residues G113 and 133 to 138; that span reads IGDFVM.

It belongs to the RNA methyltransferase TrmD family. As to quaternary structure, homodimer.

It is found in the cytoplasm. It catalyses the reaction guanosine(37) in tRNA + S-adenosyl-L-methionine = N(1)-methylguanosine(37) in tRNA + S-adenosyl-L-homocysteine + H(+). Functionally, specifically methylates guanosine-37 in various tRNAs. The polypeptide is tRNA (guanine-N(1)-)-methyltransferase (Vibrio campbellii (strain ATCC BAA-1116)).